Here is a 71-residue protein sequence, read N- to C-terminus: Small ribosomal subunit protein bS21 (71 aa).

Belongs to the bacterial ribosomal protein bS21 family.

This Psychromonas ingrahamii (strain DSM 17664 / CCUG 51855 / 37) protein is Small ribosomal subunit protein bS21.